The primary structure comprises 191 residues: Potassium-transporting ATPase KdpC subunit (191 aa).

A helical transmembrane segment spans residues 7–27; the sequence is ASLVLFLSLTLLTGVAYPLLV.

This sequence belongs to the KdpC family. The system is composed of three essential subunits: KdpA, KdpB and KdpC.

The protein localises to the cell inner membrane. Its function is as follows. Part of the high-affinity ATP-driven potassium transport (or Kdp) system, which catalyzes the hydrolysis of ATP coupled with the electrogenic transport of potassium into the cytoplasm. This subunit acts as a catalytic chaperone that increases the ATP-binding affinity of the ATP-hydrolyzing subunit KdpB by the formation of a transient KdpB/KdpC/ATP ternary complex. The protein is Potassium-transporting ATPase KdpC subunit of Methylibium petroleiphilum (strain ATCC BAA-1232 / LMG 22953 / PM1).